The primary structure comprises 546 residues: Chaperonin GroEL (546 aa).

Residues Thr30 to Pro33, Lys51, Asp87 to Thr91, Gly415, and Asp495 contribute to the ATP site.

Belongs to the chaperonin (HSP60) family. As to quaternary structure, forms a cylinder of 14 subunits composed of two heptameric rings stacked back-to-back. Interacts with the co-chaperonin GroES.

It localises to the cytoplasm. The catalysed reaction is ATP + H2O + a folded polypeptide = ADP + phosphate + an unfolded polypeptide.. Functionally, together with its co-chaperonin GroES, plays an essential role in assisting protein folding. The GroEL-GroES system forms a nano-cage that allows encapsulation of the non-native substrate proteins and provides a physical environment optimized to promote and accelerate protein folding. This is Chaperonin GroEL from Brucella anthropi (strain ATCC 49188 / DSM 6882 / CCUG 24695 / JCM 21032 / LMG 3331 / NBRC 15819 / NCTC 12168 / Alc 37) (Ochrobactrum anthropi).